A 307-amino-acid chain; its full sequence is 1-aminocyclopropane-1-carboxylate oxidase 5 (307 aa).

A coiled-coil region spans residues Ser-106 to Leu-134. One can recognise a Fe2OG dioxygenase domain in the interval Gly-152 to Pro-256. The Fe cation site is built by His-180, Asp-182, and His-237. Arg-247 contacts 2-oxoglutarate.

Belongs to the iron/ascorbate-dependent oxidoreductase family. Fe(2+) serves as cofactor.

It carries out the reaction 1-aminocyclopropane-1-carboxylate + L-ascorbate + O2 = ethene + L-dehydroascorbate + hydrogen cyanide + CO2 + 2 H2O. It participates in alkene biosynthesis; ethylene biosynthesis via S-adenosyl-L-methionine; ethylene from S-adenosyl-L-methionine: step 2/2. Enzyme involved in the ethylene biosynthesis. The protein is 1-aminocyclopropane-1-carboxylate oxidase 5 of Arabidopsis thaliana (Mouse-ear cress).